Here is a 621-residue protein sequence, read N- to C-terminus: Chaperone protein HscA homolog (621 aa).

The protein belongs to the heat shock protein 70 family.

In terms of biological role, chaperone involved in the maturation of iron-sulfur cluster-containing proteins. Has a low intrinsic ATPase activity which is markedly stimulated by HscB. The sequence is that of Chaperone protein HscA homolog from Cupriavidus necator (strain ATCC 17699 / DSM 428 / KCTC 22496 / NCIMB 10442 / H16 / Stanier 337) (Ralstonia eutropha).